The chain runs to 917 residues: Glutamate receptor (917 aa).

An N-terminal signal peptide occupies residues 1–19 (MDTCVFPLVVLWISMRITS). The Extracellular segment spans residues 20 to 556 (TLDEVPIGGI…HFFSFMEPLS (537 aa)). N-linked (GlcNAc...) asparagine glycosylation is found at Asn-62, Asn-95, Asn-121, Asn-125, Asn-229, Asn-251, Asn-261, Asn-272, Asn-418, Asn-419, Asn-424, and Asn-491. Residues 557–577 (SEIWMCIVFAYIGVSVVLFLV) form a helical membrane-spanning segment. The Cytoplasmic portion of the chain corresponds to 578-631 (SRFSPNEWHLSEAHHSYIANDFSISNSLWFSLGAFMQQGCDISPRSMSGRIVGS). The helical transmembrane segment at 632–652 (VWWFFTLIIISSYTANLAAFL) threads the bilayer. Over 653-818 (TVERMLTPID…GAQSALTLAN (166 aa)) the chain is Extracellular. N-linked (GlcNAc...) asparagine glycosylation occurs at Asn-775. A helical transmembrane segment spans residues 819-839 (VAGIFYILIGGLVVAVLSAAF). Over 840-917 (EFLYKSRMDS…FEDSNTHTEV (78 aa)) the chain is Cytoplasmic. A disordered region spans residues 871 to 896 (HIDSEQKTTGNGTRRRSHNSVTYTYT).

It belongs to the glutamate-gated ion channel (TC 1.A.10.1) family.

Its subcellular location is the cell membrane. The protein localises to the postsynaptic cell membrane. Functionally, receptor for glutamate. L-glutamate acts as an excitatory neurotransmitter at many synapses in the central nervous system. The postsynaptic actions of Glu are mediated by a variety of receptors. In Lymnaea stagnalis (Great pond snail), this protein is Glutamate receptor.